The chain runs to 382 residues: Phosphatidylglycerol--prolipoprotein diacylglyceryl transferase (382 aa).

The next 3 helical transmembrane spans lie at 18 to 38 (IQWYGIIVSIGIIFAILMFVF), 53 to 73 (FFIFIAVLTMVLGARLWSFVI), and 91 to 111 (LAIQGGILLTSIVGVIYFNFF). An a 1,2-diacyl-sn-glycero-3-phospho-(1'-sn-glycerol)-binding site is contributed by arginine 162. A run of 4 helical transmembrane segments spans residues 213–233 (IPLFLIESFFNTIFFVLIYFV), 243–263 (GTIGFSYFLATGIIRLILENF), 274–294 (ITTSILFIVVGILGIFYCQFI), and 302–322 (FWTYFFLYAFYKVAAFFTTLF).

Belongs to the Lgt family.

The protein localises to the cell membrane. It carries out the reaction L-cysteinyl-[prolipoprotein] + a 1,2-diacyl-sn-glycero-3-phospho-(1'-sn-glycerol) = an S-1,2-diacyl-sn-glyceryl-L-cysteinyl-[prolipoprotein] + sn-glycerol 1-phosphate + H(+). It functions in the pathway protein modification; lipoprotein biosynthesis (diacylglyceryl transfer). Its function is as follows. Catalyzes the transfer of the diacylglyceryl group from phosphatidylglycerol to the sulfhydryl group of the N-terminal cysteine of a prolipoprotein, the first step in the formation of mature lipoproteins. The sequence is that of Phosphatidylglycerol--prolipoprotein diacylglyceryl transferase from Mycoplasma genitalium (strain ATCC 33530 / DSM 19775 / NCTC 10195 / G37) (Mycoplasmoides genitalium).